Reading from the N-terminus, the 384-residue chain is tRNA-specific 2-thiouridylase MnmA (384 aa).

ATP is bound by residues 13–20 (GLSGGVDS) and M39. The interaction with target base in tRNA stretch occupies residues 99–101 (NPD). C104 acts as the Nucleophile in catalysis. C104 and C215 are joined by a disulfide. G128 serves as a coordination point for ATP. Positions 165-167 (KDQ) are interaction with tRNA. Catalysis depends on C215, which acts as the Cysteine persulfide intermediate. The tract at residues 333–334 (RY) is interaction with tRNA.

It belongs to the MnmA/TRMU family.

The protein localises to the cytoplasm. The catalysed reaction is S-sulfanyl-L-cysteinyl-[protein] + uridine(34) in tRNA + AH2 + ATP = 2-thiouridine(34) in tRNA + L-cysteinyl-[protein] + A + AMP + diphosphate + H(+). Functionally, catalyzes the 2-thiolation of uridine at the wobble position (U34) of tRNA, leading to the formation of s(2)U34. The chain is tRNA-specific 2-thiouridylase MnmA from Albidiferax ferrireducens (strain ATCC BAA-621 / DSM 15236 / T118) (Rhodoferax ferrireducens).